The sequence spans 404 residues: Cysteine desulfurase IscS (404 aa).

Pyridoxal 5'-phosphate-binding positions include 75–76 (AT), N155, Q183, and 203–205 (SAH). An N6-(pyridoxal phosphate)lysine modification is found at K206. Pyridoxal 5'-phosphate is bound at residue T243. C328 (cysteine persulfide intermediate) is an active-site residue. C328 lines the [2Fe-2S] cluster pocket.

Belongs to the class-V pyridoxal-phosphate-dependent aminotransferase family. NifS/IscS subfamily. In terms of assembly, homodimer. Forms a heterotetramer with IscU, probably interacts with other sulfur acceptors. It depends on pyridoxal 5'-phosphate as a cofactor.

It localises to the cytoplasm. It carries out the reaction (sulfur carrier)-H + L-cysteine = (sulfur carrier)-SH + L-alanine. The protein operates within cofactor biosynthesis; iron-sulfur cluster biosynthesis. Inhibited by equimolar N-iodoacetyl-N'-(5-sulfo-1-naphthyl)ethylenediamine. Its function is as follows. Master enzyme that delivers sulfur to a number of partners involved in Fe-S cluster assembly, tRNA modification or cofactor biosynthesis. Catalyzes the removal of elemental sulfur from cysteine to produce alanine via an enzyme-bound persulfide intermediate. Functions as a sulfur delivery protein for Fe-S cluster synthesis. Cluster assembly on IscU homodimers proceeds sequentially from 1 2Fe-2S per dimer, to 2 2Fe-2S per dimer and finally 1 4Fe-4S per dimer. This Azotobacter vinelandii protein is Cysteine desulfurase IscS.